Here is a 467-residue protein sequence, read N- to C-terminus: Polygalacturonase (467 aa).

Positions 1 to 27 are cleaved as a signal peptide; sequence MALQRRFFQFVIITLLIPSFILGYTSA. Asp-283 serves as the catalytic Proton donor. An N-linked (GlcNAc...) asparagine glycan is attached at Asn-290. Residue His-306 is part of the active site.

Belongs to the glycosyl hydrolase 28 family.

It is found in the secreted. The protein localises to the cell wall. It carries out the reaction (1,4-alpha-D-galacturonosyl)n+m + H2O = (1,4-alpha-D-galacturonosyl)n + (1,4-alpha-D-galacturonosyl)m.. Acts in concert with the pectinesterase, in the ripening process. Is involved in cell wall metabolism, specifically in polyuronide degradation. This Actinidia deliciosa (Kiwi) protein is Polygalacturonase.